We begin with the raw amino-acid sequence, 261 residues long: 5'-nucleotidase SurE (261 aa).

Residues D8, D9, S43, and N96 each coordinate a divalent metal cation.

It belongs to the SurE nucleotidase family. A divalent metal cation is required as a cofactor.

Its subcellular location is the cytoplasm. It catalyses the reaction a ribonucleoside 5'-phosphate + H2O = a ribonucleoside + phosphate. Its function is as follows. Nucleotidase that shows phosphatase activity on nucleoside 5'-monophosphates. This Cereibacter sphaeroides (strain ATCC 17023 / DSM 158 / JCM 6121 / CCUG 31486 / LMG 2827 / NBRC 12203 / NCIMB 8253 / ATH 2.4.1.) (Rhodobacter sphaeroides) protein is 5'-nucleotidase SurE.